A 377-amino-acid chain; its full sequence is Tryptophan--tRNA ligase, mitochondrial (377 aa).

ATP-binding positions include Q21 and 28 to 31 (HLGN). The 'HIGH' region motif lies at 22–31 (PTSSALHLGN). L-tryptophan is bound at residue D181. Residues 193 to 195 (GED), 242 to 246 (KMSKS), and K245 each bind ATP. The 'KMSKS' region motif lies at 242-246 (KMSKS).

The protein belongs to the class-I aminoacyl-tRNA synthetase family.

It is found in the mitochondrion matrix. The enzyme catalyses tRNA(Trp) + L-tryptophan + ATP = L-tryptophyl-tRNA(Trp) + AMP + diphosphate + H(+). In Dictyostelium discoideum (Social amoeba), this protein is Tryptophan--tRNA ligase, mitochondrial (wars2).